The chain runs to 766 residues: Polyribonucleotide nucleotidyltransferase (766 aa).

Mg(2+) is bound by residues D490 and D496. The KH domain occupies 557–616 (PKIDTITIPVDKIKVVIGKGGEQIDKIIAETGVKIDIDDEGLCSIFSSDQSAIDRAKEII). The region spanning 626–694 (GEVYEAKVVR…DKGRVDASMR (69 aa)) is the S1 motif domain. Composition is skewed to basic and acidic residues over residues 700-734 (PEGY…DRNN) and 744-766 (FELR…KKPE). Residues 700 to 766 (PEGYVEPERK…FPELSTKKPE (67 aa)) form a disordered region.

Belongs to the polyribonucleotide nucleotidyltransferase family. Requires Mg(2+) as cofactor.

Its subcellular location is the cytoplasm. The catalysed reaction is RNA(n+1) + phosphate = RNA(n) + a ribonucleoside 5'-diphosphate. Functionally, involved in mRNA degradation. Catalyzes the phosphorolysis of single-stranded polyribonucleotides processively in the 3'- to 5'-direction. The polypeptide is Polyribonucleotide nucleotidyltransferase (Lactococcus lactis subsp. cremoris (strain MG1363)).